Here is a 331-residue protein sequence, read N- to C-terminus: ESX-3 secretion system protein EccE3 (331 aa).

2 helical membrane passes run 11–31 (GRVT…PWQS) and 37–57 (LLGV…GLYF).

It belongs to the EccE family. As to quaternary structure, part of the ESX-3 / type VII secretion system (T7SS), which is composed of cytosolic and membrane components. The ESX-3 membrane complex is composed of EccB3, EccC3, EccD3 and EccE3.

It is found in the cell inner membrane. In terms of biological role, part of the ESX-3 specialized secretion system, which is important for iron and zinc uptake or homeostasis. In Mycobacterium tuberculosis (strain CDC 1551 / Oshkosh), this protein is ESX-3 secretion system protein EccE3.